Reading from the N-terminus, the 302-residue chain is Glutaminase (302 aa).

Substrate-binding residues include serine 61, asparagine 111, glutamate 155, asparagine 162, tyrosine 186, tyrosine 238, and valine 256.

The protein belongs to the glutaminase family. Homotetramer.

The enzyme catalyses L-glutamine + H2O = L-glutamate + NH4(+). This Pseudomonas fluorescens (strain ATCC BAA-477 / NRRL B-23932 / Pf-5) protein is Glutaminase.